Here is a 500-residue protein sequence, read N- to C-terminus: NAD(P)H-quinone oxidoreductase chain 4, chloroplastic (500 aa).

A run of 14 helical transmembrane segments spans residues 4-24, 35-55, 87-107, 113-130, 134-154, 167-187, 211-231, 242-262, 272-292, 305-325, 330-350, 386-406, 416-436, and 462-482; these read FPWLTIIVVFPISAGSLMLFL, YTICICILELLLTTYAFCYNF, IGTILLTGFITTLATLAAFPV, FFHFLMLAMYSGQIGSFS, LLLFFIMWELELIPVYLLLSM, FILYTAGSSIFLLIGVLGISL, ILFYIGFLIAFAVKSPIIPLH, HYSTCMLLAGILLKMGAYGLV, AHSMFSPWLLVVGTIQIIYAA, IAYSSVSHMGFIIIGISSITD, GAILQIISHGFIGAALFFLAG, LALPGMSGFIAEFIVFFGIIT, IFIIFVMAIGMILTPIYLLSM, and LFLSISILLPIIGIGIYPDFV.

The protein belongs to the complex I subunit 4 family.

It localises to the plastid. The protein localises to the chloroplast thylakoid membrane. It carries out the reaction a plastoquinone + NADH + (n+1) H(+)(in) = a plastoquinol + NAD(+) + n H(+)(out). The enzyme catalyses a plastoquinone + NADPH + (n+1) H(+)(in) = a plastoquinol + NADP(+) + n H(+)(out). This chain is NAD(P)H-quinone oxidoreductase chain 4, chloroplastic (ndhD), found in Arabidopsis thaliana (Mouse-ear cress).